A 608-amino-acid chain; its full sequence is Translation initiation factor RLI1 (608 aa).

4Fe-4S ferredoxin-type domains are found at residues 7-39 (RIAIVSADKCKPKKCRQECKRSCPVVKTGKLCI) and 46-75 (KIAFISEILCIGCGICVKKCPFDAIQIINL). 2 consecutive ABC transporter domains span residues 70-320 (IQII…FLDG) and 345-568 (LQND…LKNL). 110 to 117 (GTNGIGKS) serves as a coordination point for ATP. Residue S349 is modified to Phosphoserine. 385-392 (GENGTGKT) contacts ATP.

This sequence belongs to the ABC transporter superfamily. ABCE family. Component of the multifactor complex (MFC) composed of at least RLI1, the eIF2 subunit SUI2, TIF5/eIF5, and the eIF3 subunits PRT1, HCR1, NIP1, RPG1, TIF34 and TIF35. The complex associates with pre-initiation complexes. Interacts with the complex YAE1:LTO1; the complex bridges the interaction between the CIA complex and RLI1.

It localises to the cytoplasm. Its subcellular location is the nucleus. In terms of biological role, component of the multifactor complex (MFC) involved in translation initiation. Required for the binding of MFC to the 40S ribosome. Required for the processing and nuclear export of the 60S and 40S ribosomal subunits. The sequence is that of Translation initiation factor RLI1 (RLI1) from Saccharomyces cerevisiae (strain ATCC 204508 / S288c) (Baker's yeast).